The following is a 271-amino-acid chain: 3'-phosphoadenosine 5'-phosphate phosphatase (271 aa).

Positions 73, 91, 93, 94, and 216 each coordinate Mg(2+). Glutamate 73 serves as a coordination point for substrate. Residues 93–96 (LDGT) and aspartate 216 each bind substrate.

It belongs to the inositol monophosphatase superfamily. In terms of assembly, homodimer. It depends on Mg(2+) as a cofactor.

It carries out the reaction adenosine 3',5'-bisphosphate + H2O = AMP + phosphate. It catalyses the reaction beta-D-fructose 1,6-bisphosphate + H2O = beta-D-fructose 6-phosphate + phosphate. The catalysed reaction is a myo-inositol phosphate + H2O = myo-inositol + phosphate. The protein operates within sulfur metabolism; sulfate assimilation. Its function is as follows. Phosphatase with a broad specificity. Its primary physiological function is to dephosphorylate 3'-phosphoadenosine 5'-phosphate (PAP) and 3'-phosphoadenosine 5'-phosphosulfate (PAPS). Thus, plays a role in mycobacterial sulfur metabolism, since it can serve as a key regulator of the sulfate assimilation pathway by controlling the pools of PAP and PAPS in the cell. To a lesser extent, is also able to hydrolyze inositol 1-phosphate (I-1-P), fructose 1,6-bisphosphate (FBP) (to fructose 6-phosphate (F-6-P)) and AMP in vitro, but this might not be significant in vivo. In Mycobacterium leprae (strain TN), this protein is 3'-phosphoadenosine 5'-phosphate phosphatase (cysQ).